The primary structure comprises 694 residues: MAQLDTLDLVVLAVLLVGSVAYFTKGTYWAVAKDPYASTGPAMNGAAKAGKTRNIIEKMEETGKNCVIFYGSQTGTAEDYASRLAKEGSQRFGLKTMVADLEEYDYENLDQFPEDKVAFFVLATYGEGEPTDNAVEFYQFFTGDDVAFESASADEKPLSKLKYVAFGLGNNTYEHYNAMVRQVDAAFQKLGPQRIGSAGEGDDGAGTMEEDFLAWKEPMWAALSESMDLEEREAVYEPVFCVTENESLSPEDETVYLGEPTQSHLQGTPKGPYSAHNPFIAPIAESRELFTVKDRNCLHMEISIAGSNLSYQTGDHIAVWPTNAGAEVDRFLQVFGLEGKRDSVINIKGIDVTAKVPIPTPTTYDAAVRYYMEVCAPVSRQFVATLAAFAPDEESKAEIVRLGSHKDYFHEKVTNQCFNMAQALQSITSKPFSAVPFSLLIEGITKLQPRYYSISSSSLVQKDKISITAVVESVRLPGASHMVKGVTTNYLLALKQKQNGDPSPDPHGLTYSITGPRNKYDGIHVPVHVRHSNFKLPSDPSRPIIMVGPGTGVAPFRGFIQERAALAAKGEKVGPTVLFFGCRKSDEDFLYKDEWKTYQDQLGDNLKIITAFSREGPQKVYVQHRLREHSELVSDLLKQKATFYVCGDAANMAREVNLVLGQIIAAQRGLPAEKGEEMVKHMRRRGRYQEDVWS.

Over 1 to 8 the chain is Lumenal; that stretch reads MAQLDTLD. The helical transmembrane segment at 9–31 threads the bilayer; that stretch reads LVVLAVLLVGSVAYFTKGTYWAV. The Cytoplasmic portion of the chain corresponds to 32 to 694; sequence AKDPYASTGP…RGRYQEDVWS (663 aa). The Flavodoxin-like domain maps to 66-220; it reads CVIFYGSQTG…DFLAWKEPMW (155 aa). FMN is bound by residues 72–77, 123–126, 168–177, and aspartate 203; these read SQTGTA, ATYG, and LGNNTYEHYN. The FAD-binding FR-type domain occupies 276–537; sequence HNPFIAPIAE…HVRHSNFKLP (262 aa). Arginine 295 contributes to the NADP(+) binding site. Residues 450-453, 468-470, and 485-488 each bind FAD; these read RYYS, TAV, and GVTT. Residues threonine 551, 613–614, 619–623, and glutamate 655 each bind NADP(+); these read SR and KVYVQ. Tryptophan 693 is an FAD binding site.

This sequence belongs to the NADPH--cytochrome P450 reductase family. The protein in the N-terminal section; belongs to the flavodoxin family. It in the C-terminal section; belongs to the flavoprotein pyridine nucleotide cytochrome reductase family. FAD is required as a cofactor. The cofactor is FMN.

It localises to the endoplasmic reticulum membrane. Its subcellular location is the mitochondrion outer membrane. It is found in the cell membrane. It carries out the reaction 2 oxidized [cytochrome P450] + NADPH = 2 reduced [cytochrome P450] + NADP(+) + H(+). Functionally, this enzyme is required for electron transfer from NADP to cytochrome P450 in microsomes. It can also provide electron transfer to heme oxygenase and cytochrome B5. Involved in ergosterol biosynthesis. The polypeptide is NADPH--cytochrome P450 reductase (Aspergillus niger).